The sequence spans 155 residues: Ribosome maturation factor RimP (155 aa).

It belongs to the RimP family.

The protein localises to the cytoplasm. Functionally, required for maturation of 30S ribosomal subunits. In Listeria monocytogenes serotype 4b (strain CLIP80459), this protein is Ribosome maturation factor RimP.